The chain runs to 251 residues: Triosephosphate isomerase (251 aa).

A substrate-binding site is contributed by 9–11 (NWK). Catalysis depends on H95, which acts as the Electrophile. Catalysis depends on E167, which acts as the Proton acceptor. Substrate-binding positions include G173, S213, and 234-235 (GG). S213 carries the phosphoserine modification.

It belongs to the triosephosphate isomerase family. Homodimer.

It is found in the cytoplasm. It carries out the reaction D-glyceraldehyde 3-phosphate = dihydroxyacetone phosphate. It functions in the pathway carbohydrate biosynthesis; gluconeogenesis. The protein operates within carbohydrate degradation; glycolysis; D-glyceraldehyde 3-phosphate from glycerone phosphate: step 1/1. Involved in the gluconeogenesis. Catalyzes stereospecifically the conversion of dihydroxyacetone phosphate (DHAP) to D-glyceraldehyde-3-phosphate (G3P). The chain is Triosephosphate isomerase from Bacillus cereus (strain AH820).